We begin with the raw amino-acid sequence, 159 residues long: Phosphopantetheine adenylyltransferase (159 aa).

Thr9 contributes to the substrate binding site. Residues 9 to 10 (TF) and His17 each bind ATP. Residues Lys41, Leu73, and Arg87 each contribute to the substrate site. ATP contacts are provided by residues 88–90 (GLR), Glu98, and 123–129 (YMFISAT).

Belongs to the bacterial CoaD family. As to quaternary structure, homohexamer. It depends on Mg(2+) as a cofactor.

Its subcellular location is the cytoplasm. The enzyme catalyses (R)-4'-phosphopantetheine + ATP + H(+) = 3'-dephospho-CoA + diphosphate. It participates in cofactor biosynthesis; coenzyme A biosynthesis; CoA from (R)-pantothenate: step 4/5. Its function is as follows. Reversibly transfers an adenylyl group from ATP to 4'-phosphopantetheine, yielding dephospho-CoA (dPCoA) and pyrophosphate. This chain is Phosphopantetheine adenylyltransferase, found in Nitrosomonas europaea (strain ATCC 19718 / CIP 103999 / KCTC 2705 / NBRC 14298).